Consider the following 353-residue polypeptide: UPF0283 membrane protein YcjF (353 aa).

The segment covering 1–19 has biased composition (basic and acidic residues); the sequence is MSEPLKPRIDFAEPLKEEP. The segment at 1-35 is disordered; sequence MSEPLKPRIDFAEPLKEEPTSAFKAQQTFSEAESR. Transmembrane regions (helical) follow at residues 70 to 90, 100 to 120, and 213 to 233; these read MVMG…VQWT, VALG…GSVV, and ESTL…FIAW.

This sequence belongs to the UPF0283 family.

The protein localises to the cell inner membrane. This Salmonella paratyphi C (strain RKS4594) protein is UPF0283 membrane protein YcjF.